We begin with the raw amino-acid sequence, 426 residues long: Peptidoglycan DD-endopeptidase ShyB (426 aa).

Positions 1 to 21 are cleaved as a signal peptide; that stretch reads MGQFRFLALIVAVLCFSVALF. Residues 32–48 are compositionally biased toward polar residues; that stretch reads SYSVPLNQSVNTSQPPS. Residues 32 to 55 form a disordered region; it reads SYSVPLNQSVNTSQPPSSEMVPSD. H291, D295, and H372 together coordinate Zn(2+).

This sequence belongs to the peptidase M23B family. Monomer. Zn(2+) is required as a cofactor.

Its subcellular location is the periplasm. The protein operates within cell wall degradation; peptidoglycan degradation. With respect to regulation, not inhibited by metal chelator EDTA. Its function is as follows. Cell wall peptidoglycan (PG) DD-endopeptidase, which may act as a substitute for other zinc-dependent PG endopeptidases (ShyA and ShyC) during zinc starvation. Hydrolyzes peptide cross-links which covalently connect adjacent PG strands probably to allow insertion of new glycans and thus cell wall expansion. Degrades purified whole PG sacculi in vitro. It is unclear how it is able to function in low zinc environments, but that may possibly be due to binding zinc with very high affinity, utilizing an alternative metal cofactor or that it may function independently of a bound metal cofactor. The polypeptide is Peptidoglycan DD-endopeptidase ShyB (Vibrio cholerae serotype O1 (strain ATCC 39315 / El Tor Inaba N16961)).